Reading from the N-terminus, the 493-residue chain is Alpha-amylase-related protein (493 aa).

A signal peptide spans 1-19 (MFKFALTLTLCLAGSLSLA). Position 20 is a pyrrolidone carboxylic acid (Q20). A disulfide bridge links C47 with C103. Residues N117, Q168, and D177 each coordinate Ca(2+). C156 and C170 are joined by a disulfide. R205 is a chloride binding site. Residue D207 is the Nucleophile of the active site. Residue H211 coordinates Ca(2+). E244 acts as the Proton donor in catalysis. N307 and R342 together coordinate chloride. Disulfide bonds link C375-C381, C417-C440, and C447-C459.

It belongs to the glycosyl hydrolase 13 family. As to quaternary structure, monomer. The cofactor is Ca(2+). Requires chloride as cofactor.

It is found in the secreted. The enzyme catalyses Endohydrolysis of (1-&gt;4)-alpha-D-glucosidic linkages in polysaccharides containing three or more (1-&gt;4)-alpha-linked D-glucose units.. The chain is Alpha-amylase-related protein (Amyrel) from Drosophila sechellia (Fruit fly).